Consider the following 108-residue polypeptide: Small ribosomal subunit protein eS25A (108 aa).

Residues 1–20 (MPPKQQLSKAAKAAAALAGG) are compositionally biased toward low complexity. A disordered region spans residues 1–30 (MPPKQQLSKAAKAAAALAGGKKSKKKWSKK). N,N-dimethylproline; by NTM1 is present on proline 2. Residues 21-30 (KKSKKKWSKK) are compositionally biased toward basic residues.

Belongs to the eukaryotic ribosomal protein eS25 family. Component of the small ribosomal subunit (SSU). Mature yeast ribosomes consist of a small (40S) and a large (60S) subunit. The 40S small subunit contains 1 molecule of ribosomal RNA (18S rRNA) and 33 different proteins (encoded by 57 genes). The large 60S subunit contains 3 rRNA molecules (25S, 5.8S and 5S rRNA) and 46 different proteins (encoded by 81 genes).

The protein localises to the cytoplasm. In terms of biological role, component of the ribosome, a large ribonucleoprotein complex responsible for the synthesis of proteins in the cell. The small ribosomal subunit (SSU) binds messenger RNAs (mRNAs) and translates the encoded message by selecting cognate aminoacyl-transfer RNA (tRNA) molecules. The large subunit (LSU) contains the ribosomal catalytic site termed the peptidyl transferase center (PTC), which catalyzes the formation of peptide bonds, thereby polymerizing the amino acids delivered by tRNAs into a polypeptide chain. The nascent polypeptides leave the ribosome through a tunnel in the LSU and interact with protein factors that function in enzymatic processing, targeting, and the membrane insertion of nascent chains at the exit of the ribosomal tunnel. In Saccharomyces cerevisiae (strain ATCC 204508 / S288c) (Baker's yeast), this protein is Small ribosomal subunit protein eS25A.